We begin with the raw amino-acid sequence, 451 residues long: Tryptophan--tRNA ligase (451 aa).

ATP contacts are provided by residues 10–12 (TTT) and 18–19 (GN). The short motif at 11-19 (TTGTPHLGN) is the 'HIGH' region element. Residue aspartate 143 coordinates L-tryptophan. ATP-binding positions include 155-157 (GRD), leucine 195, and 202-206 (KMSKS). Residues 202 to 206 (KMSKS) carry the 'KMSKS' region motif.

The protein belongs to the class-I aminoacyl-tRNA synthetase family. Homodimer.

Its subcellular location is the cytoplasm. The enzyme catalyses tRNA(Trp) + L-tryptophan + ATP = L-tryptophyl-tRNA(Trp) + AMP + diphosphate + H(+). Its function is as follows. Catalyzes the attachment of tryptophan to tRNA(Trp). The chain is Tryptophan--tRNA ligase from Bordetella bronchiseptica (strain ATCC BAA-588 / NCTC 13252 / RB50) (Alcaligenes bronchisepticus).